The following is a 391-amino-acid chain: Probable sugar efflux transporter (391 aa).

12 consecutive transmembrane segments (helical) span residues 16-36 (VFVFSLSAFIFNTTEFVPVAL), 51-71 (VGLMITAYAWVVSLGSLPLML), 82-102 (LLFLFALFIFSHILSALAWNF), 110-130 (MGIAFAHSIFWSITASLVIRV), 138-158 (QALGLLALGSSLAMILGLPLG), 170-190 (TFGVIGGVATLIMLLMWKLLP), 210-230 (PLLVGIYLLVIMVISGHFTTY), 247-267 (ITTLMLFVFGLAGVVGSFLFG), 277-297 (FIAFAMVLVICPQLLLFVFKN), 300-320 (WVIFLQIFLWGIGITSLTIAL), 338-358 (IFSGSYNVGIGSGALFGSIVI), and 361-381 (LGLEYIGFVGGALGLLALFWL).

Belongs to the major facilitator superfamily. SotB (TC 2.A.1.2) family.

It localises to the cell inner membrane. Its function is as follows. Involved in the efflux of sugars. The physiological role may be the reduction of the intracellular concentration of toxic sugars or sugar metabolites. This is Probable sugar efflux transporter from Helicobacter pylori (strain J99 / ATCC 700824) (Campylobacter pylori J99).